We begin with the raw amino-acid sequence, 334 residues long: AT-hook motif nuclear-localized protein 2 (334 aa).

A compositionally biased stretch (low complexity) spans 1 to 21 (METTGEVVKTTTGSDGGVTVV). Disordered stretches follow at residues 1–103 (METT…PTTS) and 109–128 (STTSEKRGKMKPATPTPSSF). The segment covering 44 to 54 (SVAPPPPPPPQ) has biased composition (pro residues). Positions 71–80 (IKKRRGRPRK) are enriched in basic residues. Residues 72–80 (KKRRGRPRK) carry the Bipartite nuclear localization signal motif. Residues 72–84 (KKRRGRPRKYGHD) constitute a DNA-binding region (a.T hook). The span at 90–103 (LSPNPISSAAPTTS) shows a compositional bias: polar residues. The PPC domain maps to 147–287 (AANFTPHIIT…PHNHNFMSSP (141 aa)). The segment covering 306-319 (SSLPISTWTPSFPS) has biased composition (polar residues). The tract at residues 306 to 334 (SSLPISTWTPSFPSDSRHKHSHDFNITLT) is disordered.

It is found in the nucleus. Its function is as follows. Transcription factor that specifically binds AT-rich DNA sequences related to the nuclear matrix attachment regions (MARs). This Arabidopsis thaliana (Mouse-ear cress) protein is AT-hook motif nuclear-localized protein 2.